Reading from the N-terminus, the 434-residue chain is MAQHTPATSRAGTFGAILRVTSGNFLEQFDFFLFGFYATYIARTFFPAESEFASLMLTFAVFGSGFLMRPVGAIVLGAYIDRIGRRKGLMVTLAIMGCGTLLIALVPGYQTIGLAAPALVLLGRLLQGFSAGVELGGVSVYLSEIATPGNKGFYTSWQSASQQVAIVVAALIGYSLNITLGHDAISEWGWRIPFFIGCMIIPLIFVLRRSLQETEAFLQRKHRPDTREIFATIAKNWRIITAGTLLVAMTTTTFYFITVYTPTYGRTVLNLSARDSLIVTMLVGVSNFIWLPIGGAISDRIGRRAVLMGITLLALITTWPVMQWLTAAPDFTRMTLVLLWFSFFFGMYNGAMVAALTEVMPVYVRTVGFSLAFSLATAIFGGLTPAISTALVKLTGDKSSPGWWLMCAALCGLAATAMLFVRLSRGYIAAENKA.

Topologically, residues 1 to 21 (MAQHTPATSRAGTFGAILRVT) are cytoplasmic. Residues 22 to 42 (SGNFLEQFDFFLFGFYATYIA) traverse the membrane as a helical segment. Residues 43-54 (RTFFPAESEFAS) lie on the Periplasmic side of the membrane. A helical membrane pass occupies residues 55-75 (LMLTFAVFGSGFLMRPVGAIV). The Cytoplasmic segment spans residues 76–87 (LGAYIDRIGRRK). A helical transmembrane segment spans residues 88–108 (GLMVTLAIMGCGTLLIALVPG). Over 109–111 (YQT) the chain is Periplasmic. The chain crosses the membrane as a helical span at residues 112 to 132 (IGLAAPALVLLGRLLQGFSAG). Over 133-164 (VELGGVSVYLSEIATPGNKGFYTSWQSASQQV) the chain is Cytoplasmic. A helical transmembrane segment spans residues 165 to 185 (AIVVAALIGYSLNITLGHDAI). Residue Ser-186 is a topological domain, periplasmic. Residues 187–207 (EWGWRIPFFIGCMIIPLIFVL) traverse the membrane as a helical segment. Over 208–238 (RRSLQETEAFLQRKHRPDTREIFATIAKNWR) the chain is Cytoplasmic. Residues 239–259 (IITAGTLLVAMTTTTFYFITV) form a helical membrane-spanning segment. The Periplasmic portion of the chain corresponds to 260–276 (YTPTYGRTVLNLSARDS). Residues 277–297 (LIVTMLVGVSNFIWLPIGGAI) form a helical membrane-spanning segment. Over 298-304 (SDRIGRR) the chain is Cytoplasmic. A helical transmembrane segment spans residues 305-325 (AVLMGITLLALITTWPVMQWL). The Periplasmic segment spans residues 326–335 (TAAPDFTRMT). A helical membrane pass occupies residues 336 to 356 (LVLLWFSFFFGMYNGAMVAAL). Topologically, residues 357–366 (TEVMPVYVRT) are cytoplasmic. A helical membrane pass occupies residues 367 to 387 (VGFSLAFSLATAIFGGLTPAI). At 388 to 400 (STALVKLTGDKSS) the chain is on the periplasmic side. The helical transmembrane segment at 401–421 (PGWWLMCAALCGLAATAMLFV) threads the bilayer. The Cytoplasmic segment spans residues 422-434 (RLSRGYIAAENKA).

This sequence belongs to the major facilitator superfamily. Metabolite:H+ Symporter (MHS) family (TC 2.A.1.6) family.

It is found in the cell inner membrane. Functionally, uptake of citrate across the boundary membrane with the concomitant transport of protons into the cell (symport system). This Salmonella typhi protein is Citrate-proton symporter (citA).